A 157-amino-acid polypeptide reads, in one-letter code: Vitamin K-dependent protein C (157 aa).

The Peptidase S1 domain occupies 1 to 157 (EKWELDLDIK…GCGRLHNYGV (157 aa)). A glycan (N-linked (GlcNAc...) asparagine) is linked at Asn17. Catalysis depends on Asp26, which acts as the Charge relay system. The N-linked (GlcNAc...) asparagine glycan is linked to Asn78. 2 disulfides stabilise this stretch: Cys96/Cys110 and Cys121/Cys149. Ser125 serves as the catalytic Charge relay system.

This sequence belongs to the peptidase S1 family. As to expression, plasma; synthesized in the liver.

It localises to the secreted. The protein localises to the golgi apparatus. The protein resides in the endoplasmic reticulum. It catalyses the reaction Degradation of blood coagulation factors Va and VIIIa.. Functionally, protein C is a vitamin K-dependent serine protease that regulates blood coagulation by inactivating factors Va and VIIIa in the presence of calcium ions and phospholipids. Exerts a protective effect on the endothelial cell barrier function. This chain is Vitamin K-dependent protein C (PROC), found in Felis catus (Cat).